The primary structure comprises 705 residues: MAREYPLNLYRNFGIMAHIDAGKTTCSERILYYTGKSHNIGEVHDGAATMDWMEQEQERGITITSAATTTFWERTEDGATADTPKHRLNIIDTPGHVDFTIEVERSLAVLDGAVCVLDANAGVEPQTETVWRQADRYKVPRMVFVNKMDKIGADFFNCVRMIEDRTGARAVPVGIPIGAETELEGLVDLVTMEEWLWQGEDLGASWVKAPIRDSLKDMAEEWRGKMIEAAVEEDDDAMMEYLEGNEPDVPTLRKLLRKGTLALHFVPVLGGSAFKNKGVQPLLNAVIDYLPSPLDVVDYMGFKPGDEEEVRNIARRADDNMAFSGLAFKIMNDPFVGSLTFTRVYSGVLKKGDTMLNSTKGKKERVGRMMMMHSNNREEIDEAFAGDIIALAGLKDTTTGDTLCDAKDPVVLETMTFPDPVIEIAVEPKTKGDQEKMSQGLARLAAEDPSFRVETDIESGQTIMKGMGELHLDILVDRLKREFKVEANIGAPQVAYRETISKEVEHTYTHKKQSGGSGQFAEVKLVITPTEPGEGYSFESRIVGGAVPKEYIPGVEKGIKSVMDSGPLAGFPVIDFKVALIDGKFHDVDSSVLAFEIAARMGMREGMKKAGAKLLEPIMKVEVITPEEYTGGIIGDLTSRRGQVSGQESRGNAIAINAFVPLANMFGYINTLRSMSSGRAQFTMLFDHYDPVPQNISDEIQAKYA.

One can recognise a tr-type G domain in the interval 8–294 (NLYRNFGIMA…AVIDYLPSPL (287 aa)). Residues 17–24 (AHIDAGKT), 92–96 (DTPGH), and 146–149 (NKMD) each bind GTP.

Belongs to the TRAFAC class translation factor GTPase superfamily. Classic translation factor GTPase family. EF-G/EF-2 subfamily.

It is found in the cytoplasm. Its function is as follows. Catalyzes the GTP-dependent ribosomal translocation step during translation elongation. During this step, the ribosome changes from the pre-translocational (PRE) to the post-translocational (POST) state as the newly formed A-site-bound peptidyl-tRNA and P-site-bound deacylated tRNA move to the P and E sites, respectively. Catalyzes the coordinated movement of the two tRNA molecules, the mRNA and conformational changes in the ribosome. The chain is Elongation factor G from Ruegeria pomeroyi (strain ATCC 700808 / DSM 15171 / DSS-3) (Silicibacter pomeroyi).